We begin with the raw amino-acid sequence, 501 residues long: Glycoprotein 3-alpha-L-fucosyltransferase A (501 aa).

Over M1 to K39 the chain is Cytoplasmic. The helical; Signal-anchor for type II membrane protein transmembrane segment at V40–C60 threads the bilayer. The Lumenal portion of the chain corresponds to R61–V501. N-linked (GlcNAc...) asparagine glycosylation is found at N64, N337, N420, and N481.

Belongs to the glycosyltransferase 10 family. Mg(2+) is required as a cofactor. The cofactor is Mn(2+). Glycosylation may be important for enzymatic activity.

Its subcellular location is the golgi apparatus. It localises to the golgi stack membrane. The enzyme catalyses N(4)-{beta-D-GlcNAc-(1-&gt;2)-alpha-D-Man-(1-&gt;3)-[beta-D-GlcNAc-(1-&gt;2)-alpha-D-Man-(1-&gt;6)]-beta-D-Man-(1-&gt;4)-beta-D-GlcNAc-(1-&gt;4)-beta-D-GlcNAc}-L-asparaginyl-[protein] + GDP-beta-L-fucose = N(4)-{beta-D-GlcNAc-(1-&gt;2)-alpha-D-Man-(1-&gt;3)-[beta-D-GlcNAc-(1-&gt;2)-alpha-D-Man-(1-&gt;6)]-beta-D-Man-(1-&gt;4)-beta-D-GlcNAc-(1-&gt;4)-[alpha-L-Fuc(1-&gt;3)]-beta-D-GlcNAc}-L-asparaginyl-[protein] + GDP + H(+). The protein operates within protein modification; protein glycosylation. With respect to regulation, inhibited by Cu(2+) and Zn(2+). Functionally, involved in cell wall synthesis. Preferentially catalyzes the addition of fucose in alpha 1-3 linkage to the first GlcNAc residue next to the peptide chains in N-glycans. In Arabidopsis thaliana (Mouse-ear cress), this protein is Glycoprotein 3-alpha-L-fucosyltransferase A (FUT11).